Reading from the N-terminus, the 365-residue chain is Aminomethyltransferase (365 aa).

The protein belongs to the GcvT family. In terms of assembly, the glycine cleavage system is composed of four proteins: P, T, L and H.

The catalysed reaction is N(6)-[(R)-S(8)-aminomethyldihydrolipoyl]-L-lysyl-[protein] + (6S)-5,6,7,8-tetrahydrofolate = N(6)-[(R)-dihydrolipoyl]-L-lysyl-[protein] + (6R)-5,10-methylene-5,6,7,8-tetrahydrofolate + NH4(+). Functionally, the glycine cleavage system catalyzes the degradation of glycine. The polypeptide is Aminomethyltransferase (Parafrankia sp. (strain EAN1pec)).